A 250-amino-acid chain; its full sequence is ATP synthase subunit a (250 aa).

6 consecutive transmembrane segments (helical) span residues 29–49 (ASLF…FATS), 84–104 (FFPL…LGMF), 114–134 (IIVT…YGFY), 143–163 (VFVP…IEII), 193–213 (FVAS…LPLI), and 216–236 (VALT…FAVL).

The protein belongs to the ATPase A chain family. In terms of assembly, F-type ATPases have 2 components, CF(1) - the catalytic core - and CF(0) - the membrane proton channel. CF(1) has five subunits: alpha(3), beta(3), gamma(1), delta(1), epsilon(1). CF(0) has three main subunits: a(1), b(2) and c(9-12). The alpha and beta chains form an alternating ring which encloses part of the gamma chain. CF(1) is attached to CF(0) by a central stalk formed by the gamma and epsilon chains, while a peripheral stalk is formed by the delta and b chains.

Its subcellular location is the cell inner membrane. In terms of biological role, key component of the proton channel; it plays a direct role in the translocation of protons across the membrane. The sequence is that of ATP synthase subunit a from Rhizobium johnstonii (strain DSM 114642 / LMG 32736 / 3841) (Rhizobium leguminosarum bv. viciae).